Here is a 229-residue protein sequence, read N- to C-terminus: Enolase-phosphatase E1 (229 aa).

This sequence belongs to the HAD-like hydrolase superfamily. MasA/MtnC family. Monomer. It depends on Mg(2+) as a cofactor.

The catalysed reaction is 5-methylsulfanyl-2,3-dioxopentyl phosphate + H2O = 1,2-dihydroxy-5-(methylsulfanyl)pent-1-en-3-one + phosphate. It functions in the pathway amino-acid biosynthesis; L-methionine biosynthesis via salvage pathway; L-methionine from S-methyl-5-thio-alpha-D-ribose 1-phosphate: step 3/6. Its pathway is amino-acid biosynthesis; L-methionine biosynthesis via salvage pathway; L-methionine from S-methyl-5-thio-alpha-D-ribose 1-phosphate: step 4/6. Its function is as follows. Bifunctional enzyme that catalyzes the enolization of 2,3-diketo-5-methylthiopentyl-1-phosphate (DK-MTP-1-P) into the intermediate 2-hydroxy-3-keto-5-methylthiopentenyl-1-phosphate (HK-MTPenyl-1-P), which is then dephosphorylated to form the acireductone 1,2-dihydroxy-3-keto-5-methylthiopentene (DHK-MTPene). The sequence is that of Enolase-phosphatase E1 from Pectobacterium carotovorum subsp. carotovorum (strain PC1).